Reading from the N-terminus, the 139-residue chain is Plasmid stability protein StbB (139 aa).

In terms of domain architecture, PINc spans 2 to 136 (ILLDTNVISE…EAAGLNVINP (135 aa)). Residues D5 and D104 each contribute to the Mg(2+) site.

It belongs to the PINc/VapC protein family. Mg(2+) serves as cofactor.

In terms of biological role, toxic component of a type II toxin-antitoxin (TA) system. An RNase. Involved in plasmid stability. The protein is Plasmid stability protein StbB (stbB) of Pseudomonas syringae pv. tomato (strain ATCC BAA-871 / DC3000).